The chain runs to 319 residues: Transaldolase (319 aa).

K131 functions as the Schiff-base intermediate with substrate in the catalytic mechanism.

It belongs to the transaldolase family. Type 1 subfamily. In terms of assembly, homodimer.

It is found in the cytoplasm. The enzyme catalyses D-sedoheptulose 7-phosphate + D-glyceraldehyde 3-phosphate = D-erythrose 4-phosphate + beta-D-fructose 6-phosphate. Its pathway is carbohydrate degradation; pentose phosphate pathway; D-glyceraldehyde 3-phosphate and beta-D-fructose 6-phosphate from D-ribose 5-phosphate and D-xylulose 5-phosphate (non-oxidative stage): step 2/3. In terms of biological role, transaldolase is important for the balance of metabolites in the pentose-phosphate pathway. This is Transaldolase from Wigglesworthia glossinidia brevipalpis.